Consider the following 421-residue polypeptide: Gamma-glutamyl phosphate reductase (421 aa).

This sequence belongs to the gamma-glutamyl phosphate reductase family.

The protein localises to the cytoplasm. It carries out the reaction L-glutamate 5-semialdehyde + phosphate + NADP(+) = L-glutamyl 5-phosphate + NADPH + H(+). It functions in the pathway amino-acid biosynthesis; L-proline biosynthesis; L-glutamate 5-semialdehyde from L-glutamate: step 2/2. In terms of biological role, catalyzes the NADPH-dependent reduction of L-glutamate 5-phosphate into L-glutamate 5-semialdehyde and phosphate. The product spontaneously undergoes cyclization to form 1-pyrroline-5-carboxylate. In Pseudomonas savastanoi pv. phaseolicola (strain 1448A / Race 6) (Pseudomonas syringae pv. phaseolicola (strain 1448A / Race 6)), this protein is Gamma-glutamyl phosphate reductase.